The following is a 309-amino-acid chain: Homoserine kinase (309 aa).

91–101 (PIGSGLGSSAC) is a binding site for ATP.

Belongs to the GHMP kinase family. Homoserine kinase subfamily.

Its subcellular location is the cytoplasm. The catalysed reaction is L-homoserine + ATP = O-phospho-L-homoserine + ADP + H(+). It participates in amino-acid biosynthesis; L-threonine biosynthesis; L-threonine from L-aspartate: step 4/5. Catalyzes the ATP-dependent phosphorylation of L-homoserine to L-homoserine phosphate. The sequence is that of Homoserine kinase from Buchnera aphidicola subsp. Schizaphis graminum (strain Sg).